Consider the following 309-residue polypeptide: Calcium homeostasis modulator protein 5 (309 aa).

Residues 1–15 (MDAFQSILKFFLNQK) lie on the Cytoplasmic side of the membrane. A helical transmembrane segment spans residues 16 to 37 (TAIGYSFMALLTVGSERLFSLV). R32 and V37 together coordinate a 1,2-diacyl-sn-glycero-3-phosphate. Topologically, residues 38 to 45 (AFKCPCSI) are extracellular. Intrachain disulfides connect C41/C127, C43/C158, and C142/C149. A helical transmembrane segment spans residues 46-70 (ENTAYGLVFLFAPAWVLLILGFFLN). The Cytoplasmic portion of the chain corresponds to 71–99 (NKAWRLFTGCCMNPQKIFPRRRCCRFFYV). Residues 100–129 (LGHITLSSLVAPVMWLSVALLNGTFYECAM) traverse the membrane as a helical segment. N121 lines the a 1,2-diacyl-sn-glycero-3-phosphate pocket. Over 130–174 (SGTRSTRLLEMICKGKPKECWEELHKVSCGKSSMAAMDSEEVRLS) the chain is Extracellular. Residues 175–200 (LQAQSQILGWCLICSASFFSLLTTCY) traverse the membrane as a helical segment. Residues 201 to 309 (ARCRSKVSYL…MILVGTAQSL (109 aa)) lie on the Cytoplasmic side of the membrane. R202 provides a ligand contact to a 1,2-diacyl-sn-glycero-3-phosphate.

This sequence belongs to the CALHM family. As to quaternary structure, oligomerizes to form undecameric cone-shaped channels.

The protein resides in the membrane. Its function is as follows. May assemble to form large pore channels with gating and ion conductance likely regulated by membrane lipids. The polypeptide is Calcium homeostasis modulator protein 5 (Rattus norvegicus (Rat)).